Reading from the N-terminus, the 732-residue chain is Probable ATP-dependent RNA helicase DHX35 homolog (732 aa).

Residues 1 to 50 (MSYHPGHGHRQEPRKGAGARRGFARPDDSADAPRTGPLIFEERSTENAGA) form a disordered region. One can recognise a Helicase ATP-binding domain in the interval 87-251 (LYMCERYRTI…FEMNETGNSD (165 aa)). 100 to 107 (GETGCGKS) lines the ATP pocket. The DEAH box signature appears at 198-201 (DEAH). A Helicase C-terminal domain is found at 283–457 (AVDTVINIHK…STILQLKALG (175 aa)).

The protein belongs to the DEAD box helicase family. DEAH subfamily.

It carries out the reaction ATP + H2O = ADP + phosphate + H(+). This chain is Probable ATP-dependent RNA helicase DHX35 homolog, found in Caenorhabditis elegans.